The chain runs to 457 residues: Argininosuccinate lyase (457 aa).

Belongs to the lyase 1 family. Argininosuccinate lyase subfamily.

Its subcellular location is the cytoplasm. The enzyme catalyses 2-(N(omega)-L-arginino)succinate = fumarate + L-arginine. Its pathway is amino-acid biosynthesis; L-arginine biosynthesis; L-arginine from L-ornithine and carbamoyl phosphate: step 3/3. The polypeptide is Argininosuccinate lyase (Escherichia fergusonii (strain ATCC 35469 / DSM 13698 / CCUG 18766 / IAM 14443 / JCM 21226 / LMG 7866 / NBRC 102419 / NCTC 12128 / CDC 0568-73)).